The chain runs to 141 residues: Hemoglobin subunit alpha-1/2/3 (141 aa).

The 141-residue stretch at 1–141 folds into the Globin domain; sequence VLSPADKTNV…VGTVLTSKYR (141 aa). Ser3 is modified (phosphoserine). At Lys7 the chain carries N6-succinyllysine. Thr8 bears the Phosphothreonine mark. Lys11 bears the N6-succinyllysine mark. Lys16 carries the N6-acetyllysine; alternate modification. Residue Lys16 is modified to N6-succinyllysine; alternate. A Phosphotyrosine modification is found at Tyr24. Ser35 bears the Phosphoserine mark. Residue Lys40 is modified to N6-succinyllysine. Ser49 bears the Phosphoserine mark. His58 provides a ligand contact to O2. Residue His87 coordinates heme b. Ser102 carries the phosphoserine modification. Position 108 is a phosphothreonine (Thr108). Residues Ser124 and Ser131 each carry the phosphoserine modification. A phosphothreonine mark is found at Thr134 and Thr137. Ser138 is subject to Phosphoserine.

The protein belongs to the globin family. Heterotetramer of two alpha chains and two beta chains. In terms of tissue distribution, red blood cells.

Involved in oxygen transport from the lung to the various peripheral tissues. This is Hemoglobin subunit alpha-1/2/3 from Macaca nemestrina (Pig-tailed macaque).